The primary structure comprises 500 residues: Glutathione gamma-glutamylcysteinyltransferase 1 (500 aa).

Residues 1–221 (MEVASLYRRV…GFMLVSRRSS (221 aa)) form the Peptidase C83 domain. Residues cysteine 56, histidine 162, and aspartate 180 contribute to the active site.

This sequence belongs to the phytochelatin synthase family. As to expression, expressed in roots and shoots.

It carries out the reaction [Glu(-Cys)](n)-Gly + glutathione + H(+) = [Glu(-Cys)](n+1)-Gly + glycine. Its activity is regulated as follows. Requires cadmium for activity. In terms of biological role, involved in the synthesis of phytochelatins (PC) and homophytochelatins (hPC), the heavy-metal-binding peptides of plants. In Triticum aestivum (Wheat), this protein is Glutathione gamma-glutamylcysteinyltransferase 1 (PCS1).